A 156-amino-acid polypeptide reads, in one-letter code: Small ribosomal subunit protein uS7 (156 aa).

The protein belongs to the universal ribosomal protein uS7 family. Part of the 30S ribosomal subunit. Contacts proteins S9 and S11.

Functionally, one of the primary rRNA binding proteins, it binds directly to 16S rRNA where it nucleates assembly of the head domain of the 30S subunit. Is located at the subunit interface close to the decoding center, probably blocks exit of the E-site tRNA. This is Small ribosomal subunit protein uS7 from Heliobacterium modesticaldum (strain ATCC 51547 / Ice1).